A 177-amino-acid chain; its full sequence is Ubiquinol-cytochrome c reductase iron-sulfur subunit (177 aa).

Residues 18–38 form a helical membrane-spanning segment; it reads MVLTASSVAAIGAVCTLWPLV. A Rieske domain is found at 88-175; sequence ARAVKMSELI…YTFISDKKIR (88 aa). The [2Fe-2S] cluster site is built by Cys120, His122, Cys139, and His142. Cys125 and Cys141 are oxidised to a cystine.

It belongs to the Rieske iron-sulfur protein family. The main subunits of complex b-c1 are: cytochrome b, cytochrome c1 and the Rieske protein. The cofactor is [2Fe-2S] cluster.

It localises to the cell membrane. It carries out the reaction a quinol + 2 Fe(III)-[cytochrome c](out) = a quinone + 2 Fe(II)-[cytochrome c](out) + 2 H(+)(out). In terms of biological role, component of the ubiquinol-cytochrome c reductase complex (complex III or cytochrome b-c1 complex), which is a respiratory chain that generates an electrochemical potential coupled to ATP synthesis. The chain is Ubiquinol-cytochrome c reductase iron-sulfur subunit (petA) from Rickettsia conorii (strain ATCC VR-613 / Malish 7).